Reading from the N-terminus, the 456-residue chain is GTPase Der (456 aa).

2 EngA-type G domains span residues P4–D169 and V178–R353. GTP-binding positions include G10–S17, D57–L61, N120–E123, G184–S191, D231–I235, and N296–D299. The KH-like domain occupies R354–Q439.

This sequence belongs to the TRAFAC class TrmE-Era-EngA-EngB-Septin-like GTPase superfamily. EngA (Der) GTPase family. In terms of assembly, associates with the 50S ribosomal subunit.

GTPase that plays an essential role in the late steps of ribosome biogenesis. This chain is GTPase Der, found in Prochlorococcus marinus (strain NATL2A).